Here is a 158-residue protein sequence, read N- to C-terminus: RNA pyrophosphohydrolase (158 aa).

The Nudix hydrolase domain maps to 6–150 (GYRLNVGIVL…KRDVYRKVMQ (145 aa)). The Nudix box motif lies at 39–60 (GGINIGETPEQAMYRELFEEIG).

It belongs to the Nudix hydrolase family. RppH subfamily. Requires a divalent metal cation as cofactor.

Its function is as follows. Accelerates the degradation of transcripts by removing pyrophosphate from the 5'-end of triphosphorylated RNA, leading to a more labile monophosphorylated state that can stimulate subsequent ribonuclease cleavage. The polypeptide is RNA pyrophosphohydrolase (Blochmanniella pennsylvanica (strain BPEN)).